Reading from the N-terminus, the 563-residue chain is Pyruvate decarboxylase isozyme 2 (563 aa).

Residues Asp-28, His-115, Tyr-157, and Arg-224 each contribute to the pyruvate site. Residues Thr-390 and 413 to 415 (GSI) contribute to the thiamine diphosphate site. Asp-444 is a binding site for Mg(2+). Residues 445–446 (GS) and 471–476 (NNGYTI) contribute to the thiamine diphosphate site. Positions 471 and 473 each coordinate Mg(2+). Residue Glu-477 participates in pyruvate binding.

Belongs to the TPP enzyme family. Homotetramer. The cofactor is Mg(2+). Thiamine diphosphate is required as a cofactor.

It localises to the cytoplasm. The protein localises to the nucleus. It catalyses the reaction pyruvate + H(+) = acetaldehyde + CO2. The catalysed reaction is 3-methyl-2-oxobutanoate + H(+) = 2-methylpropanal + CO2. It carries out the reaction (S)-3-methyl-2-oxopentanoate + H(+) = 2-methylbutanal + CO2. The enzyme catalyses indole-3-pyruvate + H(+) = indole-3-acetaldehyde + CO2. It catalyses the reaction 3-phenylpyruvate + H(+) = 2-phenylacetaldehyde + CO2. The catalysed reaction is 2-oxobutanoate + H(+) = propanal + CO2. It carries out the reaction 2-oxopentanoate + H(+) = butanal + CO2. The enzyme catalyses 2 acetaldehyde = acetoin. It catalyses the reaction acetaldehyde + pyruvate + H(+) = acetoin + CO2. It functions in the pathway fermentation; ethanol fermentation. It participates in amino-acid degradation; Ehrlich pathway. Allosterically activated by its substrate, pyruvate. In terms of biological role, second most abundant of three pyruvate decarboxylases (PDC1, PDC5, PDC6) implicated in the nonoxidative conversion of pyruvate to acetaldehyde and carbon dioxide during alcoholic fermentation. Most of the produced acetaldehyde is subsequently reduced to ethanol, but some is required for cytosolic acetyl-CoA production for biosynthetic pathways. The enzyme is also one of five 2-oxo acid decarboxylases (PDC1, PDC5, PDC6, ARO10, and THI3) able to decarboxylate more complex 2-oxo acids (alpha-keto-acids) than pyruvate, which seem mainly involved in amino acid catabolism. Here the enzyme catalyzes the decarboxylation of amino acids, which, in a first step, have been transaminated to the corresponding 2-oxo acids. In a third step, the resulting aldehydes are reduced to alcohols, collectively referred to as fusel oils or alcohols. Its preferred substrates are the transaminated amino acids derived from threonine (2-oxobutanoate), norvaline (2-oxopentanoate), valine (3-methyl-2-oxobutanoate, also alpha-keto-isovalerate), isoleucine ((3S)-3-methyl-2-oxopentanoate, also alpha-keto-beta-methylvalerate), phenylalanine (phenylpyruvate), and tryptophan (3-(indol-3-yl)pyruvate), whereas transaminated leucine is no substrate. In a side-reaction the carbanionic intermediate (or active aldehyde) generated by decarboxylation or by activation of an aldehyde can react with an aldehyde via condensation (or carboligation) yielding a 2-hydroxy ketone, collectively called acyloins. This chain is Pyruvate decarboxylase isozyme 2 (PDC5), found in Saccharomyces cerevisiae (strain ATCC 204508 / S288c) (Baker's yeast).